The primary structure comprises 165 residues: Phosphopantetheine adenylyltransferase (165 aa).

Substrate is bound at residue serine 10. ATP-binding positions include 10 to 11 and histidine 18; that span reads SF. Positions 42, 79, and 93 each coordinate substrate. ATP-binding positions include 94-96, glutamate 104, and 129-135; these read GLR and VRPITAT.

It belongs to the bacterial CoaD family. As to quaternary structure, homohexamer. Mg(2+) is required as a cofactor.

Its subcellular location is the cytoplasm. It catalyses the reaction (R)-4'-phosphopantetheine + ATP + H(+) = 3'-dephospho-CoA + diphosphate. It functions in the pathway cofactor biosynthesis; coenzyme A biosynthesis; CoA from (R)-pantothenate: step 4/5. Its function is as follows. Reversibly transfers an adenylyl group from ATP to 4'-phosphopantetheine, yielding dephospho-CoA (dPCoA) and pyrophosphate. This chain is Phosphopantetheine adenylyltransferase, found in Bradyrhizobium diazoefficiens (strain JCM 10833 / BCRC 13528 / IAM 13628 / NBRC 14792 / USDA 110).